Consider the following 200-residue polypeptide: NADH-ubiquinone oxidoreductase 21.3 kDa subunit (200 aa).

Transmembrane regions (helical) follow at residues 16 to 36 (IKSGVSGALFSGGAGLLMASL), 48 to 68 (MHVFTHGGGTIISFTLAGGIY), and 105 to 125 (FPVILGFGAMAGSVVGAFAFS).

As to quaternary structure, complex I is composed of about 40 different subunits.

It is found in the mitochondrion inner membrane. It catalyses the reaction a ubiquinone + NADH + 5 H(+)(in) = a ubiquinol + NAD(+) + 4 H(+)(out). In terms of biological role, transfer of electrons from NADH to the respiratory chain. The immediate electron acceptor for the enzyme is believed to be ubiquinone. This Neurospora crassa (strain ATCC 24698 / 74-OR23-1A / CBS 708.71 / DSM 1257 / FGSC 987) protein is NADH-ubiquinone oxidoreductase 21.3 kDa subunit.